Here is a 450-residue protein sequence, read N- to C-terminus: Phosphoglucosamine mutase (450 aa).

S104 serves as the catalytic Phosphoserine intermediate. Residues S104, D243, D245, and D247 each coordinate Mg(2+). S104 carries the post-translational modification Phosphoserine.

It belongs to the phosphohexose mutase family. It depends on Mg(2+) as a cofactor. Post-translationally, activated by phosphorylation.

The enzyme catalyses alpha-D-glucosamine 1-phosphate = D-glucosamine 6-phosphate. Its function is as follows. Catalyzes the conversion of glucosamine-6-phosphate to glucosamine-1-phosphate. This chain is Phosphoglucosamine mutase, found in Cutibacterium acnes (strain DSM 16379 / KPA171202) (Propionibacterium acnes).